Reading from the N-terminus, the 193-residue chain is Sarcoplasmic calcium-binding protein (193 aa).

3 consecutive EF-hand domains span residues 16 to 40 (MYDI…NTLI), 57 to 92 (IMSN…LCCG), and 101 to 136 (CFKT…RSAF). Ca(2+) contacts are provided by Asp-18, Asp-20, Asn-22, Tyr-24, Asp-29, Asp-70, Asn-72, Asp-74, Gln-76, Glu-81, Asp-114, Asn-116, Asp-118, and Glu-125.

As to quaternary structure, monomer and dimer. In terms of tissue distribution, skeletal muscle (at protein level).

Like parvalbumins, SCPs seem to be more abundant in fast contracting muscles, but no functional relationship can be established from this distribution. The polypeptide is Sarcoplasmic calcium-binding protein (Scylla paramamosain (Mud crab)).